Reading from the N-terminus, the 82-residue chain is ATP synthase subunit c, chloroplastic (82 aa).

A run of 2 helical transmembrane segments spans residues 4-24 (IISA…AIGP) and 57-77 (LAFM…LLFA).

Belongs to the ATPase C chain family. F-type ATPases have 2 components, F(1) - the catalytic core - and F(0) - the membrane proton channel. F(1) has five subunits: alpha(3), beta(3), gamma(1), delta(1), epsilon(1). F(0) has four main subunits: a(1), b(1), b'(1) and c(10-14). The alpha and beta chains form an alternating ring which encloses part of the gamma chain. F(1) is attached to F(0) by a central stalk formed by the gamma and epsilon chains, while a peripheral stalk is formed by the delta, b and b' chains.

The protein resides in the plastid. Its subcellular location is the chloroplast thylakoid membrane. In terms of biological role, f(1)F(0) ATP synthase produces ATP from ADP in the presence of a proton or sodium gradient. F-type ATPases consist of two structural domains, F(1) containing the extramembraneous catalytic core and F(0) containing the membrane proton channel, linked together by a central stalk and a peripheral stalk. During catalysis, ATP synthesis in the catalytic domain of F(1) is coupled via a rotary mechanism of the central stalk subunits to proton translocation. Functionally, key component of the F(0) channel; it plays a direct role in translocation across the membrane. A homomeric c-ring of between 10-14 subunits forms the central stalk rotor element with the F(1) delta and epsilon subunits. The sequence is that of ATP synthase subunit c, chloroplastic from Heterosigma akashiwo (strain NIES-293 / 8280G21-1).